We begin with the raw amino-acid sequence, 263 residues long: Receptor-transporting protein 1 (263 aa).

At 1–238 (MRIFRPWRLR…ETGSGWNFCS (238 aa)) the chain is on the cytoplasmic side. Residues 88–197 (ASGRFHCSWC…GEFCEACQEG (110 aa)) form a 3CxxC-type zinc finger. A helical transmembrane segment spans residues 239–259 (IPWCLFWATVLLLIIYLQLSF). The Extracellular portion of the chain corresponds to 260–263 (RSSV).

It belongs to the TMEM7 family. Interacts with olfactory receptors.

It localises to the cell membrane. In terms of biological role, specifically promotes functional cell surface expression of olfactory receptors, but not of other GPCRs. The chain is Receptor-transporting protein 1 (RTP1) from Macaca fascicularis (Crab-eating macaque).